A 686-amino-acid chain; its full sequence is MTDTLLPAAPQPLEKEGDDYFRKGCNPLAQTGRSKLQNQRAALNQQILKAVRMRTGAENLLKVATNQKVREQVRLELSFVNSDLQMLKEELEGLNISVGVYQGTEEAFTIPLIPLGLKETKEVDFSIVFKDFILEHYSEDSYLYEDDIADLMDLRQACRTPSRDEAGVELLMSYFIQLGFVESRFFPPTRHMGLLFTWYDSFTGVPVSQQTLLLEKASVLFNIGALYTQIGTRCNRQTQAGLESAVDAFQRAAGVLNYLKETFTHTPSYDMSPAMLSVLVKMMLAQAQESVFEKVCLPGIQNEFFVLVKVAQEAAKVAEAYRQLHAAMSQEPVKENIPYSWASVAYVKAYHYGALAHYFAATLLIDHQLKPGADEDHQEKCLSQLYDRMPEGMTPLATLKNAGQRVLLGKGHLHRAIGFHEESLREANLCKKLRDIQVLRDVLSAAHQRTQLKHTQHREDDDLLNLIDAPDVLPKTEREVKITFPDFSKVTVTDFFQKLGPLSVFSASKRWSPPRGIHFTVEEGDLGFTLRGNTPVQVHFLDPHCSASLAGAKEGDYIVSIQGVDCKWLTVSEVMKLLKSFGGEEVEMKVVSLLDSTSSMHNKCATYSVGMQKTYSMICLSMDDDDKADKTKKISKKLSFLSWGTSKNRQKSASTLCLPEVGLARSQNKKKLPTPFSLLNSDSSLY.

An REM-1 domain is found at 26–100 (NPLAQTGRSK…LEGLNISVGV (75 aa)). The segment at 46–66 (QILKAVRMRTGAENLLKVATN) is interaction with Rho. The region spanning 111–502 (PLIPLGLKET…TDFFQKLGPL (392 aa)) is the BRO1 domain. The 79-residue stretch at 515–593 (RGIHFTVEEG…EEVEMKVVSL (79 aa)) folds into the PDZ domain. The residue at position 655 (Thr-655) is a Phosphothreonine.

The protein belongs to the RHPN family. Interacts with GTP-bound RhoA and RhoB. Interacts with both GTP- and GDP-bound RhoA. Interacts with KRT18.

Its subcellular location is the cytoplasm. The protein localises to the perinuclear region. In terms of biological role, binds specifically to GTP-Rho. May function in a Rho pathway to limit stress fiber formation and/or increase the turnover of F-actin structures in the absence of high levels of RhoA activity. This chain is Rhophilin-2 (Rhpn2), found in Mus musculus (Mouse).